A 312-amino-acid chain; its full sequence is Probable myosin light chain kinase DDB_G0282429 (312 aa).

The interval 1 to 28 is disordered; that stretch reads MDRMDSSDEEIDNISDDELQSGDEIEVE. Residues 7–27 are compositionally biased toward acidic residues; it reads SDEEIDNISDDELQSGDEIEV. A Protein kinase domain is found at 38–290; it reads YILGNEIGRG…FEQCLIHPWV (253 aa). ATP is bound by residues 44 to 52 and lysine 67; that span reads IGRGAFSIV. Aspartate 158 acts as the Proton acceptor in catalysis.

This sequence belongs to the protein kinase superfamily. CAMK Ser/Thr protein kinase family. CaMK subfamily.

The catalysed reaction is L-seryl-[myosin light chain] + ATP = O-phospho-L-seryl-[myosin light chain] + ADP + H(+). The enzyme catalyses L-threonyl-[myosin light chain] + ATP = O-phospho-L-threonyl-[myosin light chain] + ADP + H(+). With respect to regulation, does not have a calmodulin-binding domain. Functionally, may phosphorylate a specific serine in the N-terminus of a myosin light chain. This is Probable myosin light chain kinase DDB_G0282429 from Dictyostelium discoideum (Social amoeba).